A 253-amino-acid chain; its full sequence is FAS1 domain-containing protein CAGL0M08734g (253 aa).

The signal sequence occupies residues 1-16 (MVALKYVLVPVALVAA). The 165-residue stretch at 84 to 248 (DIYLDSQISV…GVILVIDATL (165 aa)) folds into the FAS1 domain.

The protein resides in the vacuole. The chain is FAS1 domain-containing protein CAGL0M08734g from Candida glabrata (strain ATCC 2001 / BCRC 20586 / JCM 3761 / NBRC 0622 / NRRL Y-65 / CBS 138) (Yeast).